We begin with the raw amino-acid sequence, 229 residues long: Molybdenum transport system permease protein ModB (229 aa).

Over 1 to 16 the chain is Periplasmic; that stretch reads MILTDPEWQAVLLSLK. An ABC transmembrane type-1 domain is found at 11-219; sequence VLLSLKVSSL…MISLLISEWL (209 aa). A helical membrane pass occupies residues 17–37; that stretch reads VSSLAVLFSLPFGIFFAWLLV. Topologically, residues 38–49 are cytoplasmic; sequence RCTFPGKALLDS. The helical transmembrane segment at 50–70 threads the bilayer; that stretch reads VLHLPLVLPPVVVGYLLLVSM. The Periplasmic segment spans residues 71–83; the sequence is GRRGFIGERLYDW. A helical membrane pass occupies residues 84-104; sequence FGITFAFSWRGAVLAAAVMSF. The Cytoplasmic portion of the chain corresponds to 105–136; that stretch reads PLMVRAIRLALEGVDVKLEQAARTLGAGRWRV. A helical transmembrane segment spans residues 137–157; sequence FFTITLPLTLPGIIVGTVLAF. At 158–201 the chain is on the periplasmic side; it reads ARSLGEFGATITFVSNIPGETRTIPSAMYTLIQTPGGESGAARL. Residues 202–222 form a helical membrane-spanning segment; it reads CIISIALAMISLLISEWLARI. Over 223 to 229 the chain is Cytoplasmic; it reads SRERAGR.

Belongs to the binding-protein-dependent transport system permease family. CysTW subfamily.

The protein resides in the cell inner membrane. In terms of biological role, part of the binding-protein-dependent transport system for molybdenum; probably responsible for the translocation of the substrate across the membrane. This chain is Molybdenum transport system permease protein ModB (modB), found in Escherichia coli O157:H7.